Here is a 211-residue protein sequence, read N- to C-terminus: Pyridoxine/pyridoxamine 5'-phosphate oxidase (211 aa).

Residues 7–10 (RREY) and K65 contribute to the substrate site. FMN contacts are provided by residues 60 to 65 (RIVLLK), 75 to 76 (FT), K82, and Q104. 3 residues coordinate substrate: Y122, R126, and S130. FMN is bound by residues 139 to 140 (QS) and W184. Residue 190–192 (RLH) coordinates substrate. R194 contacts FMN.

The protein belongs to the pyridoxamine 5'-phosphate oxidase family. Homodimer. It depends on FMN as a cofactor.

It carries out the reaction pyridoxamine 5'-phosphate + O2 + H2O = pyridoxal 5'-phosphate + H2O2 + NH4(+). The catalysed reaction is pyridoxine 5'-phosphate + O2 = pyridoxal 5'-phosphate + H2O2. Its pathway is cofactor metabolism; pyridoxal 5'-phosphate salvage; pyridoxal 5'-phosphate from pyridoxamine 5'-phosphate: step 1/1. It functions in the pathway cofactor metabolism; pyridoxal 5'-phosphate salvage; pyridoxal 5'-phosphate from pyridoxine 5'-phosphate: step 1/1. In terms of biological role, catalyzes the oxidation of either pyridoxine 5'-phosphate (PNP) or pyridoxamine 5'-phosphate (PMP) into pyridoxal 5'-phosphate (PLP). In Teredinibacter turnerae (strain ATCC 39867 / T7901), this protein is Pyridoxine/pyridoxamine 5'-phosphate oxidase.